Consider the following 599-residue polypeptide: UvrABC system protein C (599 aa).

Positions 15–93 constitute a GIY-YIG domain; the sequence is PCPGVYRMLD…IKALQPRYNV (79 aa). In terms of domain architecture, UVR spans 202 to 237; that stretch reads QQVINELVIRMEEASGQLAFEQAAYYRDRIASLRQI.

Belongs to the UvrC family. As to quaternary structure, interacts with UvrB in an incision complex.

The protein localises to the cytoplasm. The UvrABC repair system catalyzes the recognition and processing of DNA lesions. UvrC both incises the 5' and 3' sides of the lesion. The N-terminal half is responsible for the 3' incision and the C-terminal half is responsible for the 5' incision. This chain is UvrABC system protein C, found in Nitrosococcus oceani (strain ATCC 19707 / BCRC 17464 / JCM 30415 / NCIMB 11848 / C-107).